The following is a 162-amino-acid chain: Endoribonuclease YbeY (162 aa).

Zn(2+) contacts are provided by histidine 128, histidine 132, and histidine 138.

The protein belongs to the endoribonuclease YbeY family. The cofactor is Zn(2+).

The protein resides in the cytoplasm. In terms of biological role, single strand-specific metallo-endoribonuclease involved in late-stage 70S ribosome quality control and in maturation of the 3' terminus of the 16S rRNA. The sequence is that of Endoribonuclease YbeY from Lactococcus lactis subsp. cremoris (strain MG1363).